A 247-amino-acid chain; its full sequence is RNA-free ribonuclease P (247 aa).

Residues S223–I247 form a disordered region.

The protein belongs to the HARP family.

The enzyme catalyses Endonucleolytic cleavage of RNA, removing 5'-extranucleotides from tRNA precursor.. Its function is as follows. RNA-free RNase P that catalyzes the removal of the 5'-leader sequence from pre-tRNA to produce the mature 5'-terminus. The sequence is that of RNA-free ribonuclease P from Methanosarcina acetivorans (strain ATCC 35395 / DSM 2834 / JCM 12185 / C2A).